Consider the following 719-residue polypeptide: B3 domain-containing protein Os03g0120900 (719 aa).

The segment at residues 7 to 110 (HHHFIKVMVG…HFMVLPFGLN (104 aa)) is a DNA-binding region (TF-B3). 2 disordered regions span residues 328–381 (RGSF…RSEQ) and 412–443 (EEPQ…RNAV). Residues 351-366 (DSAENTLKERSEERQP) show a composition bias toward basic and acidic residues. Over residues 416 to 430 (HNQGENEGNLDQVNN) the composition is skewed to polar residues.

The protein localises to the nucleus. In Oryza sativa subsp. japonica (Rice), this protein is B3 domain-containing protein Os03g0120900.